The chain runs to 150 residues: Group IIC secretory phospholipase A2 (150 aa).

Residues 1–20 form the signal peptide; it reads MKGIAIFLVFIFYWTTSTLS. 8 disulfides stabilise this stretch: C46–C143, C48–C64, C63–C121, C69–C150, C70–C114, C79–C107, C97–C112, and C99–C105. Positions 47, 49, and 51 each coordinate Ca(2+). The active site involves H67. Ca(2+) is bound at residue D68. N-linked (GlcNAc...) asparagine glycosylation occurs at N92. Residue D115 is part of the active site.

Belongs to the phospholipase A2 family. Ca(2+) is required as a cofactor. In terms of tissue distribution, testis specific.

Its subcellular location is the secreted. It catalyses the reaction a 1,2-diacyl-sn-glycero-3-phosphocholine + H2O = a 1-acyl-sn-glycero-3-phosphocholine + a fatty acid + H(+). Functionally, PA2 catalyzes the calcium-dependent hydrolysis of the 2-acyl groups in 3-sn-phosphoglycerides. Testis PA2 may be important in the production of prostaglandins, by the release of arachidonic acid, which in turn are necessary for the contractions of the seminiferous tubules and the testicular capsule; they also seem to decrease sperm transit time through the male reproductive tract. This chain is Group IIC secretory phospholipase A2 (Pla2g2c), found in Mus musculus (Mouse).